The chain runs to 335 residues: Probable calcium-binding protein CML49 (335 aa).

The span at 1 to 10 (MSGYPPSSQG) shows a compositional bias: low complexity. Positions 1 to 154 (MSGYPPSSQG…PQASYGSPFA (154 aa)) are disordered. Residues 30–45 (NPPPYGSSGSNPPPPY) are compositionally biased toward pro residues. Residues 46–63 (GSSASSPYAVPYGAQPAP) are compositionally biased toward low complexity. The segment covering 110 to 141 (DYGGYGGAPQQSGHGGGYGGAPQQSGHGGGYG) has biased composition (gly residues). EF-hand domains lie at 164–199 (GTDP…YNQS) and 230–265 (FSLQ…LGFS). Ca(2+)-binding residues include Asp177, Asp179, Ser181, Glu188, Asp243, Asp245, Ser247, Arg249, and Glu254.

Functionally, potential calcium sensor. In Arabidopsis thaliana (Mouse-ear cress), this protein is Probable calcium-binding protein CML49 (CML49).